The sequence spans 513 residues: MQLNSTEISDLIKQRIEQFDVVSEARNEGTIVAVSDGIIRVHGLADVMQGEMIELPGNRYAIALNLERDSVGAVVMGPYADLAEGVKVKTTGRILEVPVGRGLLGRVVNTLGEPIDGKGPIDNDGFAPVEVIAPGVIDRKSVSQPVQTGYKAVDSMIPIGRGQRELIIGDRQTGKTAMAIDAIINQRDSGIKCVYVAVGQKASTIANVVRKLEEHGALANTVVVVASASEAAALQFLAPYSGCTMGEYFRDRGEDALIVYDDLSKQAVAYRQISLLLRRPPGREAYPGDVFYLHSRLLERASRVNEEYVEKFTKGAVTGKTGSLTALPIIETQAGDVSAFVPTNVISITDGQIFLETNLFNSGLRPAVNPGISVSRVGGAAQTKIIKKLSGGIRTALAQYRELAAFSQFASDLDDATRAQLEHGERVTELMKQKQYAPMSVAEQAVVIFAAEKGFLKGIALKKVGDFEAALLAFMNAEHANLMKLINDTGDYNAEIEAELKAGLDKFVATQTW.

169-176 contributes to the ATP binding site; sequence GDRQTGKT.

The protein belongs to the ATPase alpha/beta chains family. In terms of assembly, F-type ATPases have 2 components, CF(1) - the catalytic core - and CF(0) - the membrane proton channel. CF(1) has five subunits: alpha(3), beta(3), gamma(1), delta(1), epsilon(1). CF(0) has three main subunits: a(1), b(2) and c(9-12). The alpha and beta chains form an alternating ring which encloses part of the gamma chain. CF(1) is attached to CF(0) by a central stalk formed by the gamma and epsilon chains, while a peripheral stalk is formed by the delta and b chains.

The protein localises to the cell inner membrane. It carries out the reaction ATP + H2O + 4 H(+)(in) = ADP + phosphate + 5 H(+)(out). In terms of biological role, produces ATP from ADP in the presence of a proton gradient across the membrane. The alpha chain is a regulatory subunit. The polypeptide is ATP synthase subunit alpha (Shewanella amazonensis (strain ATCC BAA-1098 / SB2B)).